Consider the following 911-residue polypeptide: Epithelial discoidin domain-containing receptor 1 (911 aa).

A signal peptide spans M1–G19. Residues D22–A415 lie on the Extracellular side of the membrane. One can recognise an F5/8 type C domain in the interval C32–C186. 2 disulfides stabilise this stretch: C32-C186 and C75-C178. A DS-like domain region spans residues L193–D369. Ca(2+) is bound by residues N213, Q232, D235, V237, Y255, and Y257. Residue N213 is glycosylated (N-linked (GlcNAc...) asparagine). Residue N262 is glycosylated (N-linked (GlcNAc...) asparagine). C305 and C350 are disulfide-bonded. Ca(2+) is bound by residues S362 and E363. N372 and N392 each carry an N-linked (GlcNAc...) asparagine glycan. A helical transmembrane segment spans residues I416 to L436. The Cytoplasmic portion of the chain corresponds to W437–V911. The segment at I468–P496 is disordered. Over residues R477 to S494 the composition is skewed to pro residues. The PPxY motif signature appears at P479 to Y482. Phosphotyrosine; by autocatalysis is present on residues Y482, Y511, and Y518. A Protein kinase domain is found at L608 to L903. Residues L614–V622 and K653 each bind ATP. The residue at position 738 (Y738) is a Phosphotyrosine; by autocatalysis. D764 serves as the catalytic Proton acceptor. Phosphotyrosine; by autocatalysis occurs at positions 790, 794, and 795.

Belongs to the protein kinase superfamily. Tyr protein kinase family. Insulin receptor subfamily. Homodimer. Interacts (via PPxY motif) with WWC1 (via WW domains) in a collagen-regulated manner. Forms a tripartite complex with WWC1 and PRKCZ, but predominantly in the absence of collagen. Interacts (tyrosine phosphorylated) with SHC1. Interacts with SRC. Interacts with MYH9. Interacts with CDH1. Interacts with PTPN11. Interacts with NCK2. Autophosphorylated in response to fibrillar collagen binding. In terms of tissue distribution, detected in the cochlea and the organ of Corti in the inner ear. Isoform 1 is predominant and is expressed in developing embryo and adult brain. Isoform 2 is expressed in various epithelial cells.

The protein resides in the cell membrane. The catalysed reaction is L-tyrosyl-[protein] + ATP = O-phospho-L-tyrosyl-[protein] + ADP + H(+). Its function is as follows. Tyrosine kinase that functions as a cell surface receptor for fibrillar collagen and regulates cell attachment to the extracellular matrix, remodeling of the extracellular matrix, cell migration, differentiation, survival and cell proliferation. Collagen binding triggers a signaling pathway that involves SRC and leads to the activation of MAP kinases. Regulates remodeling of the extracellular matrix by up-regulation of the matrix metalloproteinases MMP2, MMP7 and MMP9, and thereby facilitates cell migration and wound healing, but also tumor cell invasion. Promotes smooth muscle cell migration, and thereby contributes to arterial wound healing. Phosphorylates PTPN11. Required for normal blastocyst implantation during pregnancy, for normal mammary gland differentiation and normal lactation. Required for normal ear morphology and normal hearing. The chain is Epithelial discoidin domain-containing receptor 1 (Ddr1) from Mus musculus (Mouse).